Consider the following 391-residue polypeptide: NADH-quinone oxidoreductase subunit D (391 aa).

This sequence belongs to the complex I 49 kDa subunit family. As to quaternary structure, NDH-1 is composed of 14 different subunits. Subunits NuoB, C, D, E, F, and G constitute the peripheral sector of the complex.

It is found in the cell inner membrane. The catalysed reaction is a quinone + NADH + 5 H(+)(in) = a quinol + NAD(+) + 4 H(+)(out). In terms of biological role, NDH-1 shuttles electrons from NADH, via FMN and iron-sulfur (Fe-S) centers, to quinones in the respiratory chain. The immediate electron acceptor for the enzyme in this species is believed to be ubiquinone. Couples the redox reaction to proton translocation (for every two electrons transferred, four hydrogen ions are translocated across the cytoplasmic membrane), and thus conserves the redox energy in a proton gradient. In Rickettsia akari (strain Hartford), this protein is NADH-quinone oxidoreductase subunit D.